Here is a 209-residue protein sequence, read N- to C-terminus: Outer-membrane lipoprotein carrier protein (209 aa).

The signal sequence occupies residues 1–23; that stretch reads MKNLLKKSLLGLAFLSLNGFAFA.

It belongs to the LolA family. As to quaternary structure, monomer.

The protein resides in the periplasm. In terms of biological role, participates in the translocation of lipoproteins from the inner membrane to the outer membrane. Only forms a complex with a lipoprotein if the residue after the N-terminal Cys is not an aspartate (The Asp acts as a targeting signal to indicate that the lipoprotein should stay in the inner membrane). The sequence is that of Outer-membrane lipoprotein carrier protein from Glaesserella parasuis serovar 5 (strain SH0165) (Haemophilus parasuis).